Reading from the N-terminus, the 33-residue chain is Putative makorin-5 (33 aa).

This chain is Putative makorin-5 (MKRN9P), found in Homo sapiens (Human).